A 799-amino-acid polypeptide reads, in one-letter code: Lon protease (799 aa).

Positions L7 to I200 constitute a Lon N-terminal domain. G352–T359 lines the ATP pocket. The Lon proteolytic domain maps to V587–G768. Active-site residues include S674 and K717. The interval P772–H799 is disordered.

It belongs to the peptidase S16 family. Homohexamer. Organized in a ring with a central cavity.

The protein localises to the cytoplasm. It catalyses the reaction Hydrolysis of proteins in presence of ATP.. ATP-dependent serine protease that mediates the selective degradation of mutant and abnormal proteins as well as certain short-lived regulatory proteins. Required for cellular homeostasis and for survival from DNA damage and developmental changes induced by stress. Degrades polypeptides processively to yield small peptide fragments that are 5 to 10 amino acids long. Binds to DNA in a double-stranded, site-specific manner. CcrM is an important target of the Lon protease pathway in C.crescentus. This Caulobacter vibrioides (strain ATCC 19089 / CIP 103742 / CB 15) (Caulobacter crescentus) protein is Lon protease.